Consider the following 267-residue polypeptide: Indole-3-glycerol phosphate synthase (267 aa).

Belongs to the TrpC family.

The enzyme catalyses 1-(2-carboxyphenylamino)-1-deoxy-D-ribulose 5-phosphate + H(+) = (1S,2R)-1-C-(indol-3-yl)glycerol 3-phosphate + CO2 + H2O. The protein operates within amino-acid biosynthesis; L-tryptophan biosynthesis; L-tryptophan from chorismate: step 4/5. The chain is Indole-3-glycerol phosphate synthase from Cupriavidus necator (strain ATCC 17699 / DSM 428 / KCTC 22496 / NCIMB 10442 / H16 / Stanier 337) (Ralstonia eutropha).